The chain runs to 31 residues: Chassatide C5 (31 aa).

The segment at residues 1-31 (GVIPCGESCVFIPCISSVVGCSCKNKVCYRN) is a cross-link (cyclopeptide (Gly-Asn)). Intrachain disulfides connect C5–C21, C9–C23, and C14–C28.

Post-translationally, this is a cyclic peptide. As to expression, expressed in pedicel, root and stem but not in leaf and fruit (at protein level).

Its function is as follows. Probably participates in a plant defense mechanism. The sequence is that of Chassatide C5 from Chassalia chartacea (Chassalia curviflora).